A 391-amino-acid chain; its full sequence is Somatostatin receptor type 1 (391 aa).

Residues 1 to 11 (MFPNGTASSPS) show a composition bias toward low complexity. The interval 1 to 49 (MFPNGTASSPSSPSPSPGSCGEGGGSRGPGAGAADGMEEPGRNASQNGT) is disordered. Over 1–55 (MFPNGTASSPSSPSPSPGSCGEGGGSRGPGAGAADGMEEPGRNASQNGTLSEGQG) the chain is Extracellular. Residue Asn4 is glycosylated (N-linked (GlcNAc...) asparagine). Positions 20 to 33 (CGEGGGSRGPGAGA) are enriched in gly residues. N-linked (GlcNAc...) asparagine glycosylation is found at Asn43 and Asn47. A helical transmembrane segment spans residues 56 to 83 (SAILISFIYSVVCLVGLCGNSMVIYVIL). The Cytoplasmic portion of the chain corresponds to 84–93 (RYAKMKTATN). Residues 94 to 119 (IYILNLAIADELLMLSVPFLVTSTLL) traverse the membrane as a helical segment. The Extracellular segment spans residues 120-130 (RHWPFGALLCR). A disulfide bridge connects residues Cys129 and Cys207. The chain crosses the membrane as a helical span at residues 131–152 (LVLSVDAVNMFTSIYCLTVLSV). The Cytoplasmic portion of the chain corresponds to 153-174 (DRYVAVVHPIKAARYRRPTVAK). Residues 175–195 (VVNLGVWVLSLLVILPIVVFS) traverse the membrane as a helical segment. Residues 196-218 (RTAANSDGTVACNMLMPEPAQRW) are Extracellular-facing. The helical transmembrane segment at 219 to 243 (LVGFVLYTFLMGFLLPVGAICLCYV) threads the bilayer. The Cytoplasmic segment spans residues 244–269 (LIIAKMRMVALKAGWQQRKRSERKIT). Residues 270–295 (LMVMMVVMVFVICWMPFYVVQLVNVF) form a helical membrane-spanning segment. Residues 296–302 (AEQDDAT) are Extracellular-facing. Residues 303-326 (VSQLSVILGYANSCANPILYGFLS) form a helical membrane-spanning segment. Topologically, residues 327-391 (DNFKRSFQRI…GTCTSRITTL (65 aa)) are cytoplasmic. Cys338 is lipidated: S-palmitoyl cysteine.

It belongs to the G-protein coupled receptor 1 family. Interacts with SKB1.

The protein localises to the cell membrane. Receptor for somatostatin with higher affinity for somatostatin-14 than -28. This receptor is coupled via pertussis toxin sensitive G proteins to inhibition of adenylyl cyclase. In addition it stimulates phosphotyrosine phosphatase and Na(+)/H(+) exchanger via pertussis toxin insensitive G proteins. The polypeptide is Somatostatin receptor type 1 (SSTR1) (Canis lupus familiaris (Dog)).